The primary structure comprises 1582 residues: Mediator of RNA polymerase II transcription subunit 12 (1582 aa).

3 disordered regions span residues 1 to 114 (MIPN…PSAL), 146 to 189 (PQGK…VQTT), and 1479 to 1512 (SQLSASISSPAAGGSTPTPIPSGTLSGGHSSQAT). A compositionally biased stretch (polar residues) spans 83 to 100 (AESSANPASPTPATTGDS). The segment covering 1479–1493 (SQLSASISSPAAGGS) has biased composition (low complexity). Residues 1499-1512 (PSGTLSGGHSSQAT) show a composition bias toward polar residues.

This sequence belongs to the Mediator complex subunit 12 family. Component of the srb8-11 complex, which itself associates with the Mediator complex.

It localises to the nucleus. Component of the srb8-11 complex. The srb8-11 complex is a regulatory module of the Mediator complex which is itself involved in regulation of basal and activated RNA polymerase II-dependent transcription. The srb8-11 complex may be involved in the transcriptional repression of a subset of genes regulated by Mediator. It may inhibit the association of the Mediator complex with RNA polymerase II to form the holoenzyme complex. The chain is Mediator of RNA polymerase II transcription subunit 12 (srb8) from Emericella nidulans (strain FGSC A4 / ATCC 38163 / CBS 112.46 / NRRL 194 / M139) (Aspergillus nidulans).